We begin with the raw amino-acid sequence, 212 residues long: Protein RER1C (212 aa).

An N-acetylmethionine modification is found at M1. 4 helical membrane-spanning segments follow: residues 55-75 (TVPH…IYIV), 82-102 (GFYI…IAFL), 135-155 (EFKF…MTFF), and 157-177 (VFDV…LFFL).

This sequence belongs to the RER1 family.

Its subcellular location is the membrane. In terms of biological role, involved in the retrieval of endoplasmic reticulum membrane proteins from the early Golgi compartment. In Arabidopsis thaliana (Mouse-ear cress), this protein is Protein RER1C (RER1C).